The sequence spans 329 residues: Cytosolic arginine sensor for mTORC1 subunit 2 (329 aa).

2 consecutive ACT domains span residues alanine 72–serine 140 and glutamate 262–lysine 322.

This sequence belongs to the GATS family. As to quaternary structure, forms homodimers and heterodimers with CASTOR1. Interacts with the GATOR2 complex which is composed of MIOS, SEC13, SEH1L, WDR24 and WDR59; the interaction is not regulated by arginine.

The protein resides in the cytoplasm. It is found in the cytosol. Its function is as follows. Functions as a negative regulator of the TORC1 signaling pathway through the GATOR complex. As part of homodimers or heterodimers with CASTOR1, directly binds and inhibits the GATOR subcomplex GATOR2 and thereby mTORC1. Does not directly bind arginine, but binding of arginine to CASTOR1 disrupts the interaction of CASTOR2-containing heterodimers with GATOR2 which can in turn activate mTORC1 and the TORC1 signaling pathway. In Mus musculus (Mouse), this protein is Cytosolic arginine sensor for mTORC1 subunit 2.